Here is a 122-residue protein sequence, read N- to C-terminus: uncharacterized protein (122 aa).

Positions 1–28 (MVPGPPESVVRFFLWFCFLLPPTRKASC) are cleaved as a signal peptide. N-linked (GlcNAc...) asparagine glycosylation occurs at Asn49.

It localises to the secreted. This is an uncharacterized protein from Homo sapiens (Human).